A 346-amino-acid chain; its full sequence is Guanine nucleotide-binding protein subunit beta-2 (346 aa).

WD repeat units follow at residues 57–96 (GHIN…KVQI), 99–138 (LRSA…ASGV), 147–185 (GYEG…KTMD), 188–227 (GHAG…HKQM), 230–269 (GHDM…QIAQ), 274–313 (QKNT…HTGT), and 316–346 (GHEN…RLWL).

It belongs to the WD repeat G protein beta family. In terms of assembly, g proteins are composed of 3 units, alpha, beta and gamma. Interacts with Ggamma30A/Guanine nucleotide-binding protein subunit gamma-e. Expressed exclusively in photoreceptor cells in the compound eye (at protein level).

It localises to the cytoplasm. It is found in the cell projection. Its subcellular location is the axon. The protein resides in the rhabdomere. In terms of biological role, guanine nucleotide-binding proteins (G proteins) are involved as a modulator or transducer in various transmembrane signaling systems. The beta and gamma chains are required for the GTPase activity, for replacement of GDP by GTP, and for G protein-effector interaction. This is Guanine nucleotide-binding protein subunit beta-2 (Gbeta76C) from Drosophila melanogaster (Fruit fly).